The chain runs to 81 residues: Putative membrane protein insertion efficiency factor (81 aa).

The disordered stretch occupies residues 61-81; it reads NPGGYDPVPPIPTSRSSSMAE.

This sequence belongs to the UPF0161 family.

The protein resides in the cell inner membrane. In terms of biological role, could be involved in insertion of integral membrane proteins into the membrane. The polypeptide is Putative membrane protein insertion efficiency factor (Pseudomonas fluorescens (strain Pf0-1)).